The primary structure comprises 2036 residues: Proline-rich protein 12 (2036 aa).

Disordered stretches follow at residues 210 to 283 (GGGV…RALP), 331 to 587 (CSPL…GAPG), and 649 to 697 (APSP…DPQR). The segment covering 223–240 (QTPPYRPGPPDPPPPPRH) has biased composition (pro residues). The segment covering 249–258 (ASSSAAAAAA) has biased composition (low complexity). Ser-332 and Ser-340 each carry phosphoserine. The segment covering 340 to 365 (SPGAGEPSKAGPSGATAGASGRATGP) has biased composition (low complexity). Composition is skewed to gly residues over residues 367 to 380 (AAGG…GGGY) and 391 to 400 (TGKGGYGAAA). Low complexity-rich tracts occupy residues 411 to 432 (STAT…TGKA) and 441 to 458 (QAYS…QAYG). Pro residues predominate over residues 479-490 (PPQPPSGPPPPG). 2 stretches are compositionally biased toward polar residues: residues 493-504 (TCQSYSPDQLQG) and 523-537 (GLPT…STGH). Residues 543-558 (GHGGGWGPSSLGGGGE) show a composition bias toward gly residues. Phosphoserine is present on Ser-651. Gly residues predominate over residues 673–683 (GLGGSGGAGGP). A Phosphothreonine modification is found at Thr-738. Disordered stretches follow at residues 758 to 850 (AFLQ…PLQL), 859 to 878 (LEPA…DPPG), 886 to 925 (ALEP…KAPR), and 952 to 1068 (EMFG…CSTK). The span at 802–817 (LPSVLSHAPSPSPSAS) shows a compositional bias: low complexity. The span at 833-847 (PQPPPPPPPPPPPMP) shows a compositional bias: pro residues. A Phosphoserine modification is found at Ser-865. Positions 1037 to 1052 (AAPPPPPPPPPPPAPA) are enriched in pro residues. Phosphoserine occurs at positions 1077 and 1135. Disordered regions lie at residues 1120 to 1260 (RLPD…SLTR), 1294 to 1347 (RHPP…GGAL), 1376 to 1573 (TLPS…GEGI), and 1668 to 1840 (HRPP…PGRL). The span at 1182-1194 (PTTAGPASASTPT) shows a compositional bias: low complexity. Residues 1199-1208 (KPRGRGRGRG) are compositionally biased toward basic residues. Positions 1209 to 1223 (RKAEEAGGTRLEPLK) are enriched in basic and acidic residues. N6-acetyllysine is present on Lys-1223. Residues 1239–1257 (GTSSGDAISGTDHNSLDSS) are compositionally biased toward polar residues. A Phosphothreonine modification is found at Thr-1304. 2 stretches are compositionally biased toward pro residues: residues 1306-1317 (PLSPPKSVPPSV) and 1324-1338 (PQPP…PPPS). Residue Ser-1308 is modified to Phosphoserine. Phosphoserine is present on residues Ser-1381, Ser-1382, and Ser-1387. 2 stretches are compositionally biased toward pro residues: residues 1420 to 1438 (DGPP…PLPG) and 1458 to 1535 (PPTP…APSP). Basic and acidic residues predominate over residues 1541–1553 (PDTRPLHLAKKQE). Thr-1561 bears the Phosphothreonine mark. Ser-1568 carries the post-translational modification Phosphoserine. Over residues 1691 to 1703 (APPPKAPAPPPKP) the composition is skewed to pro residues. 2 stretches are compositionally biased toward basic and acidic residues: residues 1704 to 1715 (ETPEKTTSEKPP) and 1737 to 1769 (PVEK…RPER). Thr-1705 is subject to Phosphothreonine. Residues 1817–1829 (GSSSDSESSPGAP) show a composition bias toward low complexity. Residue Ser-1925 is modified to Phosphoserine.

The protein localises to the nucleus. Its subcellular location is the postsynaptic density. It is found in the synapse. The protein resides in the synaptosome. This chain is Proline-rich protein 12, found in Homo sapiens (Human).